Reading from the N-terminus, the 1166-residue chain is Serine/threonine-protein kinase BRI1-like 1 (1166 aa).

The first 21 residues, 1-21 (MKQRWLLVLILCFFTTSLVMG), serve as a signal peptide directing secretion. Over 22–776 (IHGKHLINDD…IHAKKQTVAT (755 aa)) the chain is Extracellular. Asn33 carries N-linked (GlcNAc...) asparagine glycosylation. Positions 66–73 (CSWRGVSC) match the Cys pair 1 motif. LRR repeat units follow at residues 78 to 99 (RIVG…VNLT), 103 to 124 (NLQN…SGSD), 126 to 147 (YLQV…DYVF), 152 to 173 (NLVS…APSS), 176 to 197 (SLTT…SFIS), 202 to 224 (SLKY…SFGI), 227 to 248 (NLTF…ITLP), 252 to 274 (FLET…EYWG), 278 to 300 (NLKQ…LSLL), 303 to 325 (TLVI…FTAC), 327 to 349 (WLQN…VVSK), 352 to 375 (GITY…TNCS), 376 to 397 (NLRV…GFCS), 403 to 424 (VLEK…ELGK), 427 to 449 (SLKT…IWML), 451 to 473 (NLSD…VCVK), 476 to 498 (NLET…ISRC), 500 to 522 (NMIW…IGNL), 524 to 547 (KLAI…GNCK), and 548 to 570 (SLIW…LASQ). N-linked (GlcNAc...) asparagine glycosylation occurs at Asn97. Residue Asn157 is glycosylated (N-linked (GlcNAc...) asparagine). N-linked (GlcNAc...) asparagine glycans are attached at residues Asn212, Asn227, Asn237, and Asn257. N-linked (GlcNAc...) asparagine glycans are attached at residues Asn362 and Asn373. Asn451 and Asn461 each carry an N-linked (GlcNAc...) asparagine glycan. N-linked (GlcNAc...) asparagine glycans are attached at residues Asn521, Asn532, Asn558, and Asn638. LRR repeat units follow at residues 664–686 (YLQV…FGGL), 688–710 (AIGV…LGSL), and 712–734 (FLSD…GQLT). Asn722 and Asn743 each carry an N-linked (GlcNAc...) asparagine glycan. Positions 748-755 (CGVPLRPC) match the Cys pair 2 motif. The helical transmembrane segment at 777-797 (AVIAGIAFSFMCFVMLVMALY) threads the bilayer. Residues 798 to 1166 (RVRKVQKKEQ…LVEESRDKEP (369 aa)) lie on the Cytoplasmic side of the membrane. A phosphothreonine mark is found at Thr848 and Thr856. Residues 859-1147 (FSAETMVGSG…KADTEEDESL (289 aa)) enclose the Protein kinase domain. ATP-binding positions include 865-873 (VGSGGFGEV) and Lys887. Tyr932 is modified (phosphotyrosine). Asp987 functions as the Proton acceptor in the catalytic mechanism. Phosphoserine is present on Ser1022. Tyr1030 carries the phosphotyrosine modification. At Thr1141 the chain carries Phosphothreonine. The segment at 1142-1166 (EEDESLDEFSLKETPLVEESRDKEP) is disordered.

This sequence belongs to the protein kinase superfamily. Ser/Thr protein kinase family. As to expression, predominantly expressed in vascular tissues. From 7 day old seedlings, it is expressed in the columella cells of the root tip, in the vascular initials in the meristematic region of the root and in vascular tissues. After germination, it is expressed in the stele cell and in the early differentiation zone of the root, where the expression continues from the root to the hypocotyls and cotyledons following the midvein. In mature plants, it is expressed in the vasculature of the leaf, predominantly in the midvein, and in the vascular bundles of inflorescence stems. Localizes to procambial cells of the vascular bundles located between the differentiating xylem and the phloem.

The protein localises to the cell membrane. It carries out the reaction L-seryl-[protein] + ATP = O-phospho-L-seryl-[protein] + ADP + H(+). The catalysed reaction is L-threonyl-[protein] + ATP = O-phospho-L-threonyl-[protein] + ADP + H(+). Receptor with a serine/threonine-protein kinase activity. Regulates, in response to brassinosteroid binding, a signaling cascade involved in plant development. Binds brassinolide. May be involved in cell growth and vascular differentiation. The sequence is that of Serine/threonine-protein kinase BRI1-like 1 (BRL1) from Arabidopsis thaliana (Mouse-ear cress).